The primary structure comprises 1368 residues: DNA-directed RNA polymerase subunit beta (1368 aa).

The protein belongs to the RNA polymerase beta chain family. The RNAP catalytic core consists of 2 alpha, 1 beta, 1 beta' and 1 omega subunit. When a sigma factor is associated with the core the holoenzyme is formed, which can initiate transcription.

It catalyses the reaction RNA(n) + a ribonucleoside 5'-triphosphate = RNA(n+1) + diphosphate. DNA-dependent RNA polymerase catalyzes the transcription of DNA into RNA using the four ribonucleoside triphosphates as substrates. The sequence is that of DNA-directed RNA polymerase subunit beta from Burkholderia pseudomallei (strain K96243).